The sequence spans 316 residues: Cell division protein ZipA (316 aa).

Residues 1-5 (MQELR) lie on the Periplasmic side of the membrane. A helical transmembrane segment spans residues 6-26 (FVLIVVGALAIAALLFHGLWS). At 27 to 316 (SKKEGKAKFG…QIVEFNAANA (290 aa)) the chain is on the cytoplasmic side. The tract at residues 36-65 (GNKPLGKLDVDQGDKDSVEQERSFAPATED) is disordered. Positions 41–57 (GKLDVDQGDKDSVEQER) are enriched in basic and acidic residues.

This sequence belongs to the ZipA family. Interacts with FtsZ via their C-terminal domains.

It is found in the cell inner membrane. In terms of biological role, essential cell division protein that stabilizes the FtsZ protofilaments by cross-linking them and that serves as a cytoplasmic membrane anchor for the Z ring. Also required for the recruitment to the septal ring of downstream cell division proteins. The chain is Cell division protein ZipA from Vibrio parahaemolyticus serotype O3:K6 (strain RIMD 2210633).